The primary structure comprises 171 residues: Co-chaperone protein HscB (171 aa).

Residues 2-74 (DYFTLFGLPA…LMRAEYLLSL (73 aa)) enclose the J domain.

Belongs to the HscB family. Interacts with HscA and stimulates its ATPase activity. Interacts with IscU.

Its function is as follows. Co-chaperone involved in the maturation of iron-sulfur cluster-containing proteins. Seems to help targeting proteins to be folded toward HscA. The polypeptide is Co-chaperone protein HscB (Shigella boydii serotype 18 (strain CDC 3083-94 / BS512)).